The primary structure comprises 145 residues: Basic phospholipase A2 S6-45 (145 aa).

An N-terminal signal peptide occupies residues 1-19 (MYPAHLLVLLAVCVSLLGA). The propeptide occupies 20–27 (SDIPPQPL). 7 cysteine pairs are disulfide-bonded: cysteine 38-cysteine 99, cysteine 54-cysteine 144, cysteine 56-cysteine 72, cysteine 71-cysteine 127, cysteine 78-cysteine 120, cysteine 88-cysteine 113, and cysteine 106-cysteine 118. Ca(2+)-binding residues include tyrosine 55, glycine 57, and glycine 59. Histidine 75 is an active-site residue. A Ca(2+)-binding site is contributed by aspartate 76. Aspartate 121 is a catalytic residue.

The protein belongs to the phospholipase A2 family. Group I subfamily. D49 sub-subfamily. Requires Ca(2+) as cofactor. As to expression, expressed by the venom gland.

The protein resides in the secreted. It carries out the reaction a 1,2-diacyl-sn-glycero-3-phosphocholine + H2O = a 1-acyl-sn-glycero-3-phosphocholine + a fatty acid + H(+). Snake venom phospholipase A2 (PLA2) that inhibits collagen-induced platelet aggregation. PLA2 catalyzes the calcium-dependent hydrolysis of the 2-acyl groups in 3-sn-phosphoglycerides. In Austrelaps superbus (Lowland copperhead snake), this protein is Basic phospholipase A2 S6-45.